We begin with the raw amino-acid sequence, 122 residues long: Small ribosomal subunit protein uS13 (122 aa).

Residues 99–122 form a disordered region; sequence RGQRTHTNARTRKGPAKAIAGKKK.

It belongs to the universal ribosomal protein uS13 family. In terms of assembly, part of the 30S ribosomal subunit. Forms a loose heterodimer with protein S19. Forms two bridges to the 50S subunit in the 70S ribosome.

Functionally, located at the top of the head of the 30S subunit, it contacts several helices of the 16S rRNA. In the 70S ribosome it contacts the 23S rRNA (bridge B1a) and protein L5 of the 50S subunit (bridge B1b), connecting the 2 subunits; these bridges are implicated in subunit movement. Contacts the tRNAs in the A and P-sites. The polypeptide is Small ribosomal subunit protein uS13 (Rhizobium etli (strain CIAT 652)).